The following is a 390-amino-acid chain: MTDQTLEQIFEQQFGQSSTHRFFAPGRINLIGEHTDYNGGHVFPCALTLGTHAVARKRDDVVFRFYSLNFEDDGIIEVAGDDLTPQSAHGWANYAKGMIHVLREAGYRIDTGCDILIKGDIPNGAGLSSSASLELVIGVLLDKLYNLDIDRIDLVKYGQQVENQYIGVNSGIMDQFAIGMGKAGSGLLLDCETLDYTYAPLDLSGYTIIIMNTNKRRELADSKYNERRSECEAALAYLQQYRPYASLGQWSMNEFETVSFEDERLERRARHAISENERTLQALDALKEDRLEAFGQLMNASHRSLRVDYEVTGKELDTLVEAAWAQPGVLGARMTGAGFGGCAIAIVEDDTVETFMTAVGHAYETEIGYPASFYTATVGDGAREVEQEVI.

33–36 lines the substrate pocket; it reads EHTD. ATP contacts are provided by residues serine 67 and 124–130; that span reads GAGLSSS. Mg(2+) is bound by residues serine 130 and glutamate 162. The active-site Proton acceptor is the aspartate 174. Position 224 (tyrosine 224) interacts with substrate.

It belongs to the GHMP kinase family. GalK subfamily.

The protein localises to the cytoplasm. It catalyses the reaction alpha-D-galactose + ATP = alpha-D-galactose 1-phosphate + ADP + H(+). Its pathway is carbohydrate metabolism; galactose metabolism. Catalyzes the transfer of the gamma-phosphate of ATP to D-galactose to form alpha-D-galactose-1-phosphate (Gal-1-P). This Exiguobacterium sibiricum (strain DSM 17290 / CCUG 55495 / CIP 109462 / JCM 13490 / 255-15) protein is Galactokinase.